We begin with the raw amino-acid sequence, 20 residues long: Fibrinogen beta chain (20 aa).

Tyrosine 5 is subject to Sulfotyrosine.

In terms of assembly, heterohexamer; disulfide linked. Contains 2 sets of 3 non-identical chains (alpha, beta and gamma). The 2 heterotrimers are in head to head conformation with the N-termini in a small central domain. In terms of processing, conversion of fibrinogen to fibrin is triggered by thrombin, which cleaves fibrinopeptides A and B from alpha and beta chains, and thus exposes the N-terminal polymerization sites responsible for the formation of the soft clot.

It localises to the secreted. In terms of biological role, cleaved by the protease thrombin to yield monomers which, together with fibrinogen alpha (FGA) and fibrinogen gamma (FGG), polymerize to form an insoluble fibrin matrix. Fibrin has a major function in hemostasis as one of the primary components of blood clots. In addition, functions during the early stages of wound repair to stabilize the lesion and guide cell migration during re-epithelialization. Was originally thought to be essential for platelet aggregation, based on in vitro studies using anticoagulated blood. However subsequent studies have shown that it is not absolutely required for thrombus formation in vivo. Enhances expression of SELP in activated platelets. Maternal fibrinogen is essential for successful pregnancy. Fibrin deposition is also associated with infection, where it protects against IFNG-mediated hemorrhage. May also facilitate the antibacterial immune response via both innate and T-cell mediated pathways. The sequence is that of Fibrinogen beta chain (FGB) from Capra hircus (Goat).